The following is a 639-amino-acid chain: Protein phosphatase 2C 35 (639 aa).

A PPM-type phosphatase domain is found at 227 to 630 (GGDPCGLQWA…DDVSVIVISL (404 aa)). Mn(2+)-binding residues include aspartate 262 and glycine 263. The tract at residues 295–341 (QNVQHDQRPDQPGSAPSTTASDNQDQWGRRRRTRRSRPPRGADDDQR) is disordered. A compositionally biased stretch (polar residues) spans 308–320 (SAPSTTASDNQDQ). Over residues 323-332 (RRRRTRRSRP) the composition is skewed to basic residues. Residues aspartate 558 and aspartate 621 each coordinate Mn(2+).

This sequence belongs to the PP2C family. In terms of assembly, interacts with XA21 (via juxtamembrane and kinase domains). The cofactor is Mg(2+). Mn(2+) serves as cofactor.

The protein localises to the cell membrane. It catalyses the reaction O-phospho-L-seryl-[protein] + H2O = L-seryl-[protein] + phosphate. It carries out the reaction O-phospho-L-threonyl-[protein] + H2O = L-threonyl-[protein] + phosphate. Its function is as follows. Protein phosphatase that acts on XA21 pathogen recognition receptor. Negatively regulates cell death and XA21-mediated innate immunity. This is Protein phosphatase 2C 35 (XB15) from Oryza sativa subsp. japonica (Rice).